The primary structure comprises 365 residues: MIQTTVLHPKHLEAGAKMVDFHGWEMPINYGSQLEEHHAVRTDAGMFDVSHMTIVDLTGERVKAFLQHLLANDVAKLTVPGKALYSGMLNPDGGVIDDLITYYLTDTFYRLVVNSATREKDLAWIRHHAIDFAVSVTERPELAMIAVQGPNAKAKAAKVFTPEQNAAVEGMKPFFGVQAGDLFIATTGYTGEDGYEIVVPQEKACDLWQALLDNGVAPCGLGARDTLRLEAGMNLYSQDMDESISPLAANMAWTLAFEPASRQFIGRAALEAQKAAGTQLKQVGLVMEEKGVLRAGMPVTFTTASGEKREGVITSGSFSPTLGYSIALARVPRDIGEQAEVEIRKKLVTVKVTKPAFVRNGQKLV.

This sequence belongs to the GcvT family. As to quaternary structure, the glycine cleavage system is composed of four proteins: P, T, L and H.

It catalyses the reaction N(6)-[(R)-S(8)-aminomethyldihydrolipoyl]-L-lysyl-[protein] + (6S)-5,6,7,8-tetrahydrofolate = N(6)-[(R)-dihydrolipoyl]-L-lysyl-[protein] + (6R)-5,10-methylene-5,6,7,8-tetrahydrofolate + NH4(+). The glycine cleavage system catalyzes the degradation of glycine. The sequence is that of Aminomethyltransferase from Aeromonas salmonicida (strain A449).